A 304-amino-acid polypeptide reads, in one-letter code: Small glutamine-rich tetratricopeptide repeat-containing protein beta (304 aa).

4 TPR repeats span residues 15–49 (LREQ…SPED), 85–118 (ADQL…DPNN), 120–152 (VYYC…DSKY), and 153–186 (SKAY…DPEN). Residue K131 is modified to N6-acetyllysine. 3 positions are modified to phosphoserine: S293, S295, and S297.

It belongs to the SGT family. Homooligomerize.

Functionally, co-chaperone that binds directly to HSC70 and HSP70 and regulates their ATPase activity. This chain is Small glutamine-rich tetratricopeptide repeat-containing protein beta (Sgtb), found in Mus musculus (Mouse).